Consider the following 370-residue polypeptide: MELGCPELLEPPEDIFSTGSFLELGFNGPASKVPVTRGLQKSEPDDFLNLFIDPNMIHCSETSPGRDSGVSEDPGSPAQQASSSPALYEVVYDSGTLQGTQREAGPTFGLISIQIDQWTPALMVPDACTVSGLPSDSHRHILPRVSTRAPAPPAAMPSCQHHLFLTDEEKQLLAQEGITLPSHLPLTKAEERILKKIRRKIRNKQSAQDSRRRKKEYLDGLESRVAACSEQNQKLQRKVQELERQNIFLMEQVRQLQKLTAQTSSRAAQTSTCVLILLFSLALIILPSFSPFQGQSEARPEDYQLHGVISRNILTHENVTENLESPVLKSKLEELPEAPTTNGSTKTHLKMRVKARPPGQIRGMVHTDEM.

Positions 1-55 (MELGCPELLEPPEDIFSTGSFLELGFNGPASKVPVTRGLQKSEPDDFLNLFIDPN) are required for transcriptional activation. Topologically, residues 1–271 (MELGCPELLE…QTSSRAAQTS (271 aa)) are cytoplasmic. Positions 61–85 (ETSPGRDSGVSEDPGSPAQQASSSP) are disordered. Over residues 76–85 (SPAQQASSSP) the composition is skewed to low complexity. One can recognise a bZIP domain in the interval 193 to 256 (ILKKIRRKIR…IFLMEQVRQL (64 aa)). Residues 195–234 (KKIRRKIRNKQSAQDSRRRKKEYLDGLESRVAACSEQNQK) are basic motif. The leucine-zipper stretch occupies residues 235–256 (LQRKVQELERQNIFLMEQVRQL). A helical; Signal-anchor for type II membrane protein transmembrane segment spans residues 272-292 (TCVLILLFSLALIILPSFSPF). Over 293–370 (QGQSEARPED…IRGMVHTDEM (78 aa)) the chain is Lumenal. N318 and N342 each carry an N-linked (GlcNAc...) asparagine glycan.

It belongs to the bZIP family. ATF subfamily. In terms of assembly, binds DNA as a dimer. Forms a heterodimer with CREM isoform Tau. Controlled by regulated intramembrane proteolysis (RIP). Following ER stress a fragment containing the cytoplasmic transcription factor domain is released by proteolysis. The cleavage seems to be performed sequentially by site-1 and site-2 proteases (PS1 and PS2). PS1 cleavage may be suppressed by a determinant in the C-terminal region. In terms of tissue distribution, predominantly expressed at high levels in testis with isoform 2 being the predominant isoform. Specifically expressed in postmeiotic spermatids and accumulates in the mid/late stage (at protein level). Ubiquitously expressed at low levels.

It is found in the endoplasmic reticulum membrane. It localises to the cytoplasmic vesicle. The protein localises to the secretory vesicle. The protein resides in the acrosome inner membrane. Its subcellular location is the nucleus. Its function is as follows. Transcriptional activator that may play a role in the unfolded protein response of the testis. Proposed to be involved in spermiogenesis. May be involved in regulating the maturation of sperm head nuclei. Alternatively proposed to be a paternally delivered transcription factor that may function in early zygotic gene activation. Increases the binding of CREM isoform Tau with CRE. The CREM isoform Tau-CREB3L4 heterodimer functions through CRE but not through UPRE and may recruit HIRA to CRE to regulate histone exchange. The protein is Cyclic AMP-responsive element-binding protein 3-like protein 4 (Creb3l4) of Mus musculus (Mouse).